The chain runs to 264 residues: Thymidylate synthase (264 aa).

Position 21 (Arg-21) interacts with dUMP. (6R)-5,10-methylene-5,6,7,8-tetrahydrofolate is bound at residue His-51. 126 to 127 (RR) contributes to the dUMP binding site. The active-site Nucleophile is Cys-146. Residues 166-169 (RSAD), Asn-177, and 207-209 (HLY) each bind dUMP. Residue Asp-169 participates in (6R)-5,10-methylene-5,6,7,8-tetrahydrofolate binding. (6R)-5,10-methylene-5,6,7,8-tetrahydrofolate is bound at residue Ser-263.

Belongs to the thymidylate synthase family. Bacterial-type ThyA subfamily. Homodimer.

Its subcellular location is the cytoplasm. It carries out the reaction dUMP + (6R)-5,10-methylene-5,6,7,8-tetrahydrofolate = 7,8-dihydrofolate + dTMP. The protein operates within pyrimidine metabolism; dTTP biosynthesis. Functionally, catalyzes the reductive methylation of 2'-deoxyuridine-5'-monophosphate (dUMP) to 2'-deoxythymidine-5'-monophosphate (dTMP) while utilizing 5,10-methylenetetrahydrofolate (mTHF) as the methyl donor and reductant in the reaction, yielding dihydrofolate (DHF) as a by-product. This enzymatic reaction provides an intracellular de novo source of dTMP, an essential precursor for DNA biosynthesis. The polypeptide is Thymidylate synthase (Shouchella clausii (strain KSM-K16) (Alkalihalobacillus clausii)).